The chain runs to 192 residues: Phage-like element PBSX protein XkdU (192 aa).

This sequence to B.subtilis YqcA.

The chain is Phage-like element PBSX protein XkdU (xkdU) from Bacillus subtilis (strain 168).